A 367-amino-acid polypeptide reads, in one-letter code: 3-isopropylmalate dehydrogenase (367 aa).

80–93 (GKEWTHLPADEQPE) contributes to the NAD(+) binding site. 4 residues coordinate substrate: Arg-101, Arg-111, Arg-140, and Asp-230. Mg(2+) contacts are provided by Asp-230, Asp-254, and Asp-258. Residue 288 to 300 (GSAPDLKGKNIAN) coordinates NAD(+).

It belongs to the isocitrate and isopropylmalate dehydrogenases family. LeuB type 1 subfamily. As to quaternary structure, homodimer. The cofactor is Mg(2+). It depends on Mn(2+) as a cofactor.

It is found in the cytoplasm. The enzyme catalyses (2R,3S)-3-isopropylmalate + NAD(+) = 4-methyl-2-oxopentanoate + CO2 + NADH. It participates in amino-acid biosynthesis; L-leucine biosynthesis; L-leucine from 3-methyl-2-oxobutanoate: step 3/4. Functionally, catalyzes the oxidation of 3-carboxy-2-hydroxy-4-methylpentanoate (3-isopropylmalate) to 3-carboxy-4-methyl-2-oxopentanoate. The product decarboxylates to 4-methyl-2 oxopentanoate. This Buchnera aphidicola subsp. Cinara cedri (strain Cc) protein is 3-isopropylmalate dehydrogenase (leuB).